The sequence spans 799 residues: Heat shock protein 90-6, mitochondrial (799 aa).

Residues 1 to 48 constitute a mitochondrion transit peptide; sequence MIRLSKRSVSTLLRSGNQSFRIAAAASTSRSSPSATDVKRSDTESRWY. Low complexity predominate over residues 23-35; the sequence is AAAASTSRSSPSA. The interval 23–61 is disordered; sequence AAAASTSRSSPSATDVKRSDTESRWYSSLTNGQSKNSGS. Residues 46 to 61 are compositionally biased toward polar residues; that stretch reads RWYSSLTNGQSKNSGS. ATP contacts are provided by residues E124, N128, D170, M175, 190 to 191, 214 to 219, and T269; these read SG and QFGVGF. The tract at residues 314–337 is disordered; it reads EVEVEDDPTETKKDDQDDQTEKKK. Over residues 322–334 the composition is skewed to basic and acidic residues; the sequence is TETKKDDQDDQTE. R464 is a binding site for ATP. Residues 766–777 are compositionally biased toward polar residues; sequence SPEVQPQQQQMA. The disordered stretch occupies residues 766–799; that stretch reads SPEVQPQQQQMAHSHDAETFEAEVVEPVEVDGKK. Over residues 784 to 799 the composition is skewed to acidic residues; it reads TFEAEVVEPVEVDGKK.

Belongs to the heat shock protein 90 family. As to quaternary structure, interacts with P23-1.

It is found in the mitochondrion. Its function is as follows. Molecular chaperone which stabilizes unfolding protein intermediates and functions as a folding molecular chaperone that assists the non-covalent folding of proteins in an ATP-dependent manner. The sequence is that of Heat shock protein 90-6, mitochondrial from Arabidopsis thaliana (Mouse-ear cress).